We begin with the raw amino-acid sequence, 660 residues long: MTDRIVPATLVFREDGTVVSPLYGDIYHSAAGALAQADHVFIRGNGLPERWRHERAFTIIETGFGTGCNFLATWAAWRADPSHCERLHFVSVEKHPFAREDLRRAAAHIVAYTTITTITPIAPLVDELANAWPALTPGVHRLEFDDGRVTLTLVFGDALDVLPNLALRAHAFYLDGFAPSKNADLWSPAIFKSLAKLADERATFATYTSSGAVKRALDEAGFAYRKVDGFAGKRAMLVGEFAPRWRVRRHEPPRAFSTDRRDAIVIGAGLAGCAVVERLAARGWHVTLIERRERIASEASGNPAGVFHPMIARDDNLAARLSRAGFLHALHRWRALERAGHAFSRSTHGLVQLATSDDEFERMRESIDALGVPAELASALSRDDARALLRTDVAHGGWLFAQGGSISPATLAAAQCAAAGDRLSRIVGVEIARLERGGDGRWRALDASGATIAQASVVVVANAADAARIAGLRHAPTQRVRGQLTLLPPGSAPAVPLPVIGDGYVVPLANGVTLTGATYEPDDTDATPREAGHRENLERLERLLPAFSANALDAGALAGRVGFRCVASDRLPLVGELGDEAAAAREAAALTGARLRDVPRATGLYGAFGYGSRGLVWAALGAELIAAQIDGEPWPLERELAEAIDPARFLVRALRHGRVA.

Residues Met1–Ala242 are tRNA (mnm(5)s(2)U34)-methyltransferase. Positions Ile266 to Ala660 are FAD-dependent cmnm(5)s(2)U34 oxidoreductase.

In the N-terminal section; belongs to the methyltransferase superfamily. tRNA (mnm(5)s(2)U34)-methyltransferase family. The protein in the C-terminal section; belongs to the DAO family. FAD serves as cofactor.

Its subcellular location is the cytoplasm. The catalysed reaction is 5-aminomethyl-2-thiouridine(34) in tRNA + S-adenosyl-L-methionine = 5-methylaminomethyl-2-thiouridine(34) in tRNA + S-adenosyl-L-homocysteine + H(+). Its function is as follows. Catalyzes the last two steps in the biosynthesis of 5-methylaminomethyl-2-thiouridine (mnm(5)s(2)U) at the wobble position (U34) in tRNA. Catalyzes the FAD-dependent demodification of cmnm(5)s(2)U34 to nm(5)s(2)U34, followed by the transfer of a methyl group from S-adenosyl-L-methionine to nm(5)s(2)U34, to form mnm(5)s(2)U34. In Burkholderia mallei (strain NCTC 10247), this protein is tRNA 5-methylaminomethyl-2-thiouridine biosynthesis bifunctional protein MnmC.